The sequence spans 391 residues: DNA-directed RNA polymerase subunit Rpo1C (391 aa).

The protein belongs to the RNA polymerase beta' chain family. In terms of assembly, part of the RNA polymerase complex.

Its subcellular location is the cytoplasm. It catalyses the reaction RNA(n) + a ribonucleoside 5'-triphosphate = RNA(n+1) + diphosphate. Functionally, DNA-dependent RNA polymerase (RNAP) catalyzes the transcription of DNA into RNA using the four ribonucleoside triphosphates as substrates. Forms part of the jaw domain. The polypeptide is DNA-directed RNA polymerase subunit Rpo1C (Thermococcus gammatolerans (strain DSM 15229 / JCM 11827 / EJ3)).